Reading from the N-terminus, the 353-residue chain is Palmitoyltransferase SWF1 (353 aa).

M1 is a topological domain (lumenal). The chain crosses the membrane as a helical span at residues L2–F22. At G23 to Q61 the chain is on the cytoplasmic side. Residues L62–F82 form a helical membrane-spanning segment. Topologically, residues Q83–R100 are lumenal. Residues L101–S121 form a helical membrane-spanning segment. Over D122–K190 the chain is Cytoplasmic. Positions K147–I197 constitute a DHHC domain. The S-palmitoyl cysteine intermediate role is filled by C177. The helical transmembrane segment at W191–Y211 threads the bilayer. Over W212–G233 the chain is Lumenal. Residues I234–L254 form a helical membrane-spanning segment. The Cytoplasmic portion of the chain corresponds to R255–W353.

It belongs to the DHHC palmitoyltransferase family. SWF1 subfamily.

The protein resides in the endoplasmic reticulum membrane. It catalyses the reaction L-cysteinyl-[protein] + hexadecanoyl-CoA = S-hexadecanoyl-L-cysteinyl-[protein] + CoA. Its function is as follows. Palmitoyltransferase that targets several endosomal SNAREs. Palmitoylates the SNAREs at cysteine residues close to the cytoplasmic end of their transmembrane domain. May have a role in the cellular quality control of transmembrane domain-containing proteins. This is Palmitoyltransferase SWF1 (SWF1) from Candida albicans (strain SC5314 / ATCC MYA-2876) (Yeast).